The primary structure comprises 180 residues: Acireductone dioxygenase (180 aa).

The Fe(2+) site is built by His97, His99, Glu103, and His141. Positions 97, 99, 103, and 141 each coordinate Ni(2+).

The protein belongs to the acireductone dioxygenase (ARD) family. In terms of assembly, monomer. Fe(2+) serves as cofactor. Requires Ni(2+) as cofactor.

The enzyme catalyses 1,2-dihydroxy-5-(methylsulfanyl)pent-1-en-3-one + O2 = 3-(methylsulfanyl)propanoate + CO + formate + 2 H(+). It catalyses the reaction 1,2-dihydroxy-5-(methylsulfanyl)pent-1-en-3-one + O2 = 4-methylsulfanyl-2-oxobutanoate + formate + 2 H(+). It participates in amino-acid biosynthesis; L-methionine biosynthesis via salvage pathway; L-methionine from S-methyl-5-thio-alpha-D-ribose 1-phosphate: step 5/6. Catalyzes 2 different reactions between oxygen and the acireductone 1,2-dihydroxy-3-keto-5-methylthiopentene (DHK-MTPene) depending upon the metal bound in the active site. Fe-containing acireductone dioxygenase (Fe-ARD) produces formate and 2-keto-4-methylthiobutyrate (KMTB), the alpha-ketoacid precursor of methionine in the methionine recycle pathway. Ni-containing acireductone dioxygenase (Ni-ARD) produces methylthiopropionate, carbon monoxide and formate, and does not lie on the methionine recycle pathway. This Yersinia pseudotuberculosis serotype O:1b (strain IP 31758) protein is Acireductone dioxygenase.